The primary structure comprises 275 residues: Biotin synthase (275 aa).

A Radical SAM core domain is found at 1–217 (MLCAICNVSS…DTAKTLPQCR (217 aa)). [4Fe-4S] cluster-binding residues include Cys-13, Cys-17, and Cys-20. [2Fe-2S] cluster is bound by residues Cys-57, Cys-92, Cys-150, and Arg-217.

Belongs to the radical SAM superfamily. Biotin synthase family. In terms of assembly, homodimer. It depends on [4Fe-4S] cluster as a cofactor. [2Fe-2S] cluster is required as a cofactor.

The catalysed reaction is (4R,5S)-dethiobiotin + (sulfur carrier)-SH + 2 reduced [2Fe-2S]-[ferredoxin] + 2 S-adenosyl-L-methionine = (sulfur carrier)-H + biotin + 2 5'-deoxyadenosine + 2 L-methionine + 2 oxidized [2Fe-2S]-[ferredoxin]. Its pathway is cofactor biosynthesis; biotin biosynthesis; biotin from 7,8-diaminononanoate: step 2/2. In terms of biological role, catalyzes the conversion of dethiobiotin (DTB) to biotin by the insertion of a sulfur atom into dethiobiotin via a radical-based mechanism. This Campylobacter fetus subsp. fetus (strain 82-40) protein is Biotin synthase.